Consider the following 360-residue polypeptide: Phospho-N-acetylmuramoyl-pentapeptide-transferase (360 aa).

A run of 10 helical transmembrane segments spans residues 21-41 (YVTF…LWWG), 74-94 (MGGI…GDLA), 97-117 (YVWV…IDDY), 135-155 (ILQS…ADLV), 168-188 (IMPQ…VGSS), 199-219 (GLAI…AYLS), 236-256 (AGEL…FLWF), 263-283 (VFMG…IAVL), 288-308 (ILLV…ILQV), and 338-358 (VIVR…ATLK).

It belongs to the glycosyltransferase 4 family. MraY subfamily. Mg(2+) is required as a cofactor.

The protein localises to the cell inner membrane. The catalysed reaction is UDP-N-acetyl-alpha-D-muramoyl-L-alanyl-gamma-D-glutamyl-meso-2,6-diaminopimeloyl-D-alanyl-D-alanine + di-trans,octa-cis-undecaprenyl phosphate = di-trans,octa-cis-undecaprenyl diphospho-N-acetyl-alpha-D-muramoyl-L-alanyl-D-glutamyl-meso-2,6-diaminopimeloyl-D-alanyl-D-alanine + UMP. The protein operates within cell wall biogenesis; peptidoglycan biosynthesis. Catalyzes the initial step of the lipid cycle reactions in the biosynthesis of the cell wall peptidoglycan: transfers peptidoglycan precursor phospho-MurNAc-pentapeptide from UDP-MurNAc-pentapeptide onto the lipid carrier undecaprenyl phosphate, yielding undecaprenyl-pyrophosphoryl-MurNAc-pentapeptide, known as lipid I. The protein is Phospho-N-acetylmuramoyl-pentapeptide-transferase of Shewanella sediminis (strain HAW-EB3).